The chain runs to 131 residues: Binder of sperm protein homolog 2 (131 aa).

The signal sequence occupies residues Met-1–Ala-22. Fibronectin type-II domains are found at residues Ile-35–Ala-79 and Gln-80–Pro-128. Intrachain disulfides connect Cys-40-Cys-64, Cys-54-Cys-77, Cys-85-Cys-111, and Cys-99-Cys-126.

It belongs to the seminal plasma protein family. In terms of tissue distribution, epididymis.

It is found in the secreted. In terms of biological role, binds sperm in vitro but has no effect on sperm capacitation. Also binds gelatin and heparin, but not chondroitin sulfate B or phospholipid liposomes. This is Binder of sperm protein homolog 2 from Mus musculus (Mouse).